A 233-amino-acid chain; its full sequence is Probable fimbrial chaperone protein ElfD (233 aa).

A signal peptide spans 1–26 (MKTCITKGIVTVSLTAILLSCSSTWA).

It belongs to the periplasmic pilus chaperone family.

The protein resides in the periplasm. Part of the elfADCG fimbrial operon, which could be required for adherence to host epithelial cells. Could be required for the biogenesis of the ElfA fimbriae. In Escherichia coli O157:H7, this protein is Probable fimbrial chaperone protein ElfD (elfD).